Reading from the N-terminus, the 220-residue chain is Ribosomal RNA large subunit methyltransferase E (220 aa).

Positions 64, 66, 92, 108, and 133 each coordinate S-adenosyl-L-methionine. The active-site Proton acceptor is Lys-173.

This sequence belongs to the class I-like SAM-binding methyltransferase superfamily. RNA methyltransferase RlmE family.

It localises to the cytoplasm. It carries out the reaction uridine(2552) in 23S rRNA + S-adenosyl-L-methionine = 2'-O-methyluridine(2552) in 23S rRNA + S-adenosyl-L-homocysteine + H(+). Specifically methylates the uridine in position 2552 of 23S rRNA at the 2'-O position of the ribose in the fully assembled 50S ribosomal subunit. This chain is Ribosomal RNA large subunit methyltransferase E, found in Acidovorax sp. (strain JS42).